The primary structure comprises 441 residues: MASIPTVNVIGAGLAGSEAAWHIANMGVNVRLYEMRPNKMTPAHHTAQFAELVCTNSLRANQLANAAGLLKAEMRQMDSIVMQAAEHHAVPAGGALAVDRDTFSAEITAAITALPNVEIINEEITSLPDGITVVATGPLTAASLAKSIQAFNDEDDLHFFDAAAPILTKDSIDMDKVYLKSRYDRGEAAYLNCPMTEAEFDVFYDALIHAEMAEAHDFENSDVFEGCMPIEVMAQRGRQTMLFGPLKPVGLEDPKTGKQPFAVVQLRQDDAAGDLYNIVGFQTHLKWGEQKRVFSLIPGLENVEFVRYGVMHRNTFMKSPKLLTPTYQTQQRPDLFFAGQMTGVEGYIESAASGIVAGTNAARLALGLEPVVFPTDTMMGAMAHYITHTSASNFQPMNANFGIMPKLKQRIRDKRERNTAISERALADLTTFKDETLTVNN.

11-16 (GAGLAG) serves as a coordination point for FAD.

Belongs to the MnmG family. TrmFO subfamily. It depends on FAD as a cofactor.

The protein localises to the cytoplasm. The enzyme catalyses uridine(54) in tRNA + (6R)-5,10-methylene-5,6,7,8-tetrahydrofolate + NADH + H(+) = 5-methyluridine(54) in tRNA + (6S)-5,6,7,8-tetrahydrofolate + NAD(+). It catalyses the reaction uridine(54) in tRNA + (6R)-5,10-methylene-5,6,7,8-tetrahydrofolate + NADPH + H(+) = 5-methyluridine(54) in tRNA + (6S)-5,6,7,8-tetrahydrofolate + NADP(+). Its function is as follows. Catalyzes the folate-dependent formation of 5-methyl-uridine at position 54 (M-5-U54) in all tRNAs. The sequence is that of Methylenetetrahydrofolate--tRNA-(uracil-5-)-methyltransferase TrmFO from Lactiplantibacillus plantarum (strain ATCC BAA-793 / NCIMB 8826 / WCFS1) (Lactobacillus plantarum).